Consider the following 744-residue polypeptide: ATP-dependent zinc metalloprotease FtsH (744 aa).

The Cytoplasmic segment spans residues 1-16; sequence MQDQNNSNTPKKKKLS. A helical transmembrane segment spans residues 17 to 37; that stretch reads FWGIIGIVASILVLLVIAYII. Residues 38–177 are Extracellular-facing; that stretch reads YYYVSQTTVL…ESIWSTVLRY (140 aa). Residues 178–198 traverse the membrane as a helical segment; the sequence is GTNIIFLLLFAASFIFMFMSF. The Cytoplasmic portion of the chain corresponds to 199 to 744; sequence RSQRGTGGLL…EEKSKDEKNN (546 aa). ATP is bound at residue 264 to 271; it reads GPPGTGKT. Position 486 (H486) interacts with Zn(2+). The active site involves E487. H490 and D564 together coordinate Zn(2+). The tract at residues 722–744 is disordered; the sequence is IEANKSSSKSTVNEEKSKDEKNN. The span at 733-744 shows a compositional bias: basic and acidic residues; sequence VNEEKSKDEKNN.

In the central section; belongs to the AAA ATPase family. It in the C-terminal section; belongs to the peptidase M41 family. As to quaternary structure, homohexamer. Requires Zn(2+) as cofactor.

The protein localises to the cell membrane. Acts as a processive, ATP-dependent zinc metallopeptidase for both cytoplasmic and membrane proteins. Plays a role in the quality control of integral membrane proteins. The polypeptide is ATP-dependent zinc metalloprotease FtsH (Metamycoplasma arthritidis (strain 158L3-1) (Mycoplasma arthritidis)).